We begin with the raw amino-acid sequence, 551 residues long: Glucan 1,4-alpha-maltotetraohydrolase (551 aa).

Residues 1–21 (MSHILRAAVLAAVLLPFPALA) form the signal peptide. The Ca(2+) site is built by Asp22, Gln23, His34, Asp37, and Glu38. 99-100 (YF) lines the substrate pocket. Asn137 contributes to the Ca(2+) binding site. His138 contributes to the substrate binding site. A disulfide bridge links Cys161 with Cys171. Residues Asp172 and Asp175 each contribute to the Ca(2+) site. Residue 177–181 (FIGGE) coordinates substrate. Asp183 lines the Ca(2+) pocket. Arg212 is a substrate binding site. The active-site Nucleophile is Asp214. A Ca(2+)-binding site is contributed by Gly218. Cys237 and Cys272 are disulfide-bonded. The active-site Proton donor is the Glu240. 2 residues coordinate substrate: His314 and Gln326. The CBM20 domain occupies 449-551 (GGEGGLVNVN…AAGASTSGSF (103 aa)).

Belongs to the glycosyl hydrolase 13 family. Monomer. The cofactor is Ca(2+).

The protein resides in the secreted. The enzyme catalyses Hydrolysis of (1-&gt;4)-alpha-D-glucosidic linkages in amylaceous polysaccharides, to remove successive maltotetraose residues from the non-reducing chain ends.. The protein operates within glycan degradation; starch degradation. This is Glucan 1,4-alpha-maltotetraohydrolase (mta) from Roseateles saccharophilus (Pseudomonas saccharophila).